We begin with the raw amino-acid sequence, 167 residues long: MSVTLHTNLGDIKIELFCESVPRTAENFLALCASGQYDGTLFHRNIRGFMIQGGDPTGTGKGGQSIWGRPFSDEIRQTLRFNNRGMVAMANAGPDTNKSQFFITYAKQPSLDGKYSIFGKVIDGMETLDSMEKTPVNPKSRPLQEIKLLNVTVHANPIADQAKGGLA.

Positions 1–153 constitute a PPIase cyclophilin-type domain; that stretch reads MSVTLHTNLG…QEIKLLNVTV (153 aa).

Belongs to the cyclophilin-type PPIase family. PPIL3 subfamily.

It carries out the reaction [protein]-peptidylproline (omega=180) = [protein]-peptidylproline (omega=0). PPIases accelerate the folding of proteins. It catalyzes the cis-trans isomerization of proline imidic peptide bonds in oligopeptides. This Cryptococcus neoformans var. neoformans serotype D (strain B-3501A) (Filobasidiella neoformans) protein is Peptidyl-prolyl cis-trans isomerase-like 3 (CYP10).